We begin with the raw amino-acid sequence, 707 residues long: Drebrin (707 aa).

N-acetylalanine is present on Ala2. The 132-residue stretch at Gly3 to Ser134 folds into the ADF-H domain. A phosphoserine mark is found at Ser141 and Ser142. Residues Glu209 to Arg236 are compositionally biased toward basic and acidic residues. Disordered regions lie at residues Glu209 to Glu438, Ala452 to Ala497, Trp531 to Ser557, Leu582 to Ala609, and Leu630 to Asp707. Position 241 is a phosphoserine (Ser241). A compositionally biased stretch (basic and acidic residues) spans Asp288–Glu298. A compositionally biased stretch (low complexity) spans Ser329–Pro343. The residue at position 342 (Ser342) is a Phosphoserine. Over residues Arg355–Pro364 the composition is skewed to polar residues. Residues Thr377 and Thr381 each carry the phosphothreonine modification. Residues Pro380 to Thr395 are compositionally biased toward polar residues. Ser383, Ser385, and Ser391 each carry phosphoserine. Residue Thr392 is modified to Phosphothreonine. The span at Gln409–Ala420 shows a compositional bias: pro residues. Residues Pro428–Glu438 are compositionally biased toward basic and acidic residues. At Ser467 the chain carries Phosphoserine. At Thr549 the chain carries Phosphothreonine. Over residues Asn639–Ser652 the composition is skewed to polar residues. Ser659 is subject to Phosphoserine. Positions Pro695–Asp707 are enriched in acidic residues.

Interacts with RUFY. Interacts with CXCR4; this interaction is enhanced by antigenic stimulation. Interacts (via ADF-H domain) with ZMYND8 (via N-terminus); the interaction leads to sequestering of ZMYND8 in the cytoplasm. In terms of processing, ISGylated. In terms of tissue distribution, brain neurons.

The protein resides in the cytoplasm. The protein localises to the cell projection. Its subcellular location is the dendrite. It localises to the cell cortex. It is found in the cell junction. The protein resides in the growth cone. In terms of biological role, actin cytoskeleton-organizing protein that plays a role in the formation of cell projections. Required for actin polymerization at immunological synapses (IS) and for the recruitment of the chemokine receptor CXCR4 to IS. Plays a role in dendritic spine morphogenesis and organization, including the localization of the dopamine receptor DRD1 to the dendritic spines. Involved in memory-related synaptic plasticity in the hippocampus. This chain is Drebrin (Dbn1), found in Rattus norvegicus (Rat).